The chain runs to 177 residues: ATP synthase subunit delta (177 aa).

This sequence belongs to the ATPase delta chain family. As to quaternary structure, F-type ATPases have 2 components, F(1) - the catalytic core - and F(0) - the membrane proton channel. F(1) has five subunits: alpha(3), beta(3), gamma(1), delta(1), epsilon(1). F(0) has three main subunits: a(1), b(2) and c(10-14). The alpha and beta chains form an alternating ring which encloses part of the gamma chain. F(1) is attached to F(0) by a central stalk formed by the gamma and epsilon chains, while a peripheral stalk is formed by the delta and b chains.

The protein resides in the cell membrane. In terms of biological role, f(1)F(0) ATP synthase produces ATP from ADP in the presence of a proton or sodium gradient. F-type ATPases consist of two structural domains, F(1) containing the extramembraneous catalytic core and F(0) containing the membrane proton channel, linked together by a central stalk and a peripheral stalk. During catalysis, ATP synthesis in the catalytic domain of F(1) is coupled via a rotary mechanism of the central stalk subunits to proton translocation. This protein is part of the stalk that links CF(0) to CF(1). It either transmits conformational changes from CF(0) to CF(1) or is implicated in proton conduction. The sequence is that of ATP synthase subunit delta from Buchnera aphidicola subsp. Schizaphis graminum (strain Sg).